The sequence spans 133 residues: Napin-1 (133 aa).

2 consecutive propeptides follow at residues 31–49 (PSWT…EKQG) and 131–133 (PSY).

It belongs to the 2S seed storage albumins family. As to quaternary structure, the mature protein consists of a small and a large chain linked by disulfide bonds. As to expression, cotyledons and the axis.

In terms of biological role, the small, basic, water-soluble napins are one of the two major kinds of storage proteins synthesized in the seed during its maturation. This chain is Napin-1, found in Brassica napus (Rape).